Reading from the N-terminus, the 240-residue chain is Protein YIPF6 (240 aa).

At 1–91 (MVVSHLNRTV…PKKSSALLRD (91 aa)) the chain is on the cytoplasmic side. Residues 92 to 112 (WDLWGPLLLCVTLALMLQGGS) form a helical membrane-spanning segment. Over 113–125 (ADSEEDGRPQFAE) the chain is Lumenal. The chain crosses the membrane as a helical span at residues 126 to 146 (VFVIIWFGSVIITLNSKLLGG). Topologically, residues 147–149 (TIS) are cytoplasmic. Residues 150–170 (FFQSLCVLGYCILPLTVAMIV) form a helical membrane-spanning segment. Over 171–172 (CR) the chain is Lumenal. Residues 173–193 (IVLLGGSGVVSFAVRLIVVTA) form a helical membrane-spanning segment. The Cytoplasmic portion of the chain corresponds to 194–215 (SFSWSTFASTAFLADSQPTNRK). Residues 216–236 (ALVVYPVFLFYFVIGWMILTF) traverse the membrane as a helical segment. The Lumenal portion of the chain corresponds to 237-240 (SPSH).

This sequence belongs to the YIP1 family.

It is found in the golgi apparatus membrane. This Danio rerio (Zebrafish) protein is Protein YIPF6 (yipf6).